We begin with the raw amino-acid sequence, 186 residues long: Large ribosomal subunit protein uL16 (186 aa).

This sequence belongs to the universal ribosomal protein uL16 family.

This chain is Large ribosomal subunit protein uL16, found in Nanoarchaeum equitans (strain Kin4-M).